The sequence spans 591 residues: MEMQDLTSPHSRLSGSSESPSGPKLDSSHINSTSMTPNGTEVKTEPMSSSEIASTAADGSLDSFSGSALGSSSFSPRPAHPFSPPQIYPSKSYPHILPTPSSQTMAAYGQTQFTTGMQQATAYATYPQPGQPYGISSYGALWAGIKTESGLSQSQSPGQTGFLSYGTSFGTPQPGQAPYSYQMQGSSFTTSSGLYSGNNSLTNSSGFNSSQQDYPSYPGFGQGQYAQYYNSSPYPAHYMTSSNTSPTTPSTNATYQLQEPPSGVTSQAVTDPTAEYSTIHSPSTPIKETDSERLRRGSDGKSRGRGRRNNNPSPPPDSDLERVFIWDLDETIIVFHSLLTGSYANRYGRDPPTSVSLGLRMEEMIFNLADTHLFFNDLEECDQVHIDDVSSDDNGQDLSTYNFGTDGFPAAATSANLCLATGVRGGVDWMRKLAFRYRRVKEIYNTYKNNVGGLLGPAKREAWLQLRAEIEALTDSWLTLALKALSLIHSRTNCVNILVTTTQLIPALAKVLLYGLGIVFPIENIYSATKIGKESCFERIIQRFGRKVVYVVIGDGVEEEQGAKKHAMPFWRVSSHSDLMALHHALELEYL.

Disordered regions lie at residues 1 to 95, 150 to 169, and 239 to 319; these read MEMQ…SYPH, GLSQ…GTSF, and MTSS…PDSD. Over residues 8–23 the composition is skewed to low complexity; the sequence is SPHSRLSGSSESPSGP. A compositionally biased stretch (polar residues) spans 28–53; it reads SHINSTSMTPNGTEVKTEPMSSSEIA. Residues 56-75 show a composition bias toward low complexity; the sequence is AADGSLDSFSGSALGSSSFS. A compositionally biased stretch (pro residues) spans 78 to 87; it reads PAHPFSPPQI. The span at 240-252 shows a compositional bias: low complexity; sequence TSSNTSPTTPSTN. Residues 253-286 show a composition bias toward polar residues; sequence ATYQLQEPPSGVTSQAVTDPTAEYSTIHSPSTPI. Basic and acidic residues predominate over residues 287 to 302; sequence KETDSERLRRGSDGKS. Aspartate 327 (nucleophile) is an active-site residue. Mg(2+)-binding residues include aspartate 327, aspartate 329, and aspartate 555. The active-site Proton donor is the aspartate 329.

Belongs to the HAD-like hydrolase superfamily. EYA family. Probably interacts with SIX2, SIX4 and SIX5. Interacts with H2AX in response to DNA damage. Interacts with SIX3; promotes EYA1 translocation to the nucleus. Mg(2+) is required as a cofactor. In terms of processing, sumoylated with SUMO1. As to expression, extensively expressed in cranial placodes, branchial arches, CNS and developing eye and nose.

The protein resides in the cytoplasm. It is found in the nucleus. The enzyme catalyses O-phospho-L-tyrosyl-[protein] + H2O = L-tyrosyl-[protein] + phosphate. It catalyses the reaction O-phospho-L-seryl-[protein] + H2O = L-seryl-[protein] + phosphate. The catalysed reaction is O-phospho-L-threonyl-[protein] + H2O = L-threonyl-[protein] + phosphate. Functions both as protein phosphatase and as transcriptional coactivator for SIX1, and probably also for SIX2, SIX4 and SIX5. Tyrosine phosphatase that dephosphorylates 'Tyr-142' of histone H2AX (H2AXY142ph) and promotes efficient DNA repair via the recruitment of DNA repair complexes containing MDC1. 'Tyr-142' phosphorylation of histone H2AX plays a central role in DNA repair and acts as a mark that distinguishes between apoptotic and repair responses to genotoxic stress. Its function as histone phosphatase may contribute to its function in transcription regulation during organogenesis. Also has phosphatase activity with proteins phosphorylated on Ser and Thr residues (in vitro). Required for normal embryonic development of the craniofacial and trunk skeleton, kidneys and ears. Together with SIX1, it plays an important role in hypaxial muscle development; in this it is functionally redundant with EYA2. The protein is Protein phosphatase EYA1 (Eya1) of Mus musculus (Mouse).